The sequence spans 949 residues: Thrombospondin-4-B (949 aa).

The first 22 residues, 1–22 (MAGTMHLLTAVSLILMLSSANA), serve as a signal peptide directing secretion. One can recognise a Laminin G-like domain in the interval 23–198 (ESTVYNLLTS…LEELKLAYGD (176 aa)). 21 disulfide bridges follow: cysteine 276-cysteine 287, cysteine 281-cysteine 296, cysteine 299-cysteine 310, cysteine 316-cysteine 327, cysteine 321-cysteine 336, cysteine 339-cysteine 363, cysteine 369-cysteine 383, cysteine 377-cysteine 392, cysteine 395-cysteine 407, cysteine 413-cysteine 427, cysteine 421-cysteine 437, cysteine 439-cysteine 450, cysteine 466-cysteine 471, cysteine 476-cysteine 496, cysteine 512-cysteine 532, cysteine 535-cysteine 555, cysteine 571-cysteine 591, cysteine 594-cysteine 614, cysteine 632-cysteine 652, cysteine 672-cysteine 692, and cysteine 708-cysteine 929. One can recognise an EGF-like 1; calcium-binding domain in the interval 312-349 (DVDECQFNPCFPGVRCVNMAPGFRCEACPLGFTGKPLE). The region spanning 365–408 (DIDECKGPDNGGCTANSICVNSVGSYQCGRCKTGFTGDQIRGCK) is the EGF-like 2; calcium-binding domain. An EGF-like 3 domain is found at 409 to 451 (PEKSCGNRLQNPCDPNAQCTEERDGTITCQCGIGWAGNGYLCG). 8 TSP type-3 repeats span residues 452–484 (KDTD…NSGQ), 485–520 (EDAD…NINQ), 521–543 (QNSD…NPDQ), 544–579 (RDTD…NRDQ), 580–602 (LDRD…NPNQ), 603–640 (SDID…NSSQ), 641–680 (LDTD…NPEQ), and 681–716 (IDDN…EITL). Positions 578-671 (DQLDRDGDGV…PDSLPPGPDN (94 aa)) are disordered. Residues asparagine 601 and asparagine 637 are each glycosylated (N-linked (GlcNAc...) asparagine). A compositionally biased stretch (acidic residues) spans 649-660 (GDECDDDDDNDG). Residues 720-934 (RAYQTVVLDP…LKYRCNDTIP (215 aa)) form the TSP C-terminal domain. N-linked (GlcNAc...) asparagine glycosylation occurs at asparagine 930.

It belongs to the thrombospondin family. As to quaternary structure, homotrimer; disulfide-linked.

The protein resides in the endoplasmic reticulum. It localises to the sarcoplasmic reticulum. It is found in the secreted. The protein localises to the extracellular space. Its subcellular location is the extracellular matrix. Its function is as follows. Adhesive glycoprotein that mediates cell-to-cell and cell-to-matrix interactions and may be involved in various processes including cellular proliferation, migration, adhesion and attachment. May play a role in ER stress response. The polypeptide is Thrombospondin-4-B (thbs4b) (Danio rerio (Zebrafish)).